The sequence spans 157 residues: SsrA-binding protein (157 aa).

The interval 132-157 (KLHDKRETEKKRDWSREKGRLLRSRG) is disordered. Residues 135–151 (DKRETEKKRDWSREKGR) show a composition bias toward basic and acidic residues.

This sequence belongs to the SmpB family.

Its subcellular location is the cytoplasm. In terms of biological role, required for rescue of stalled ribosomes mediated by trans-translation. Binds to transfer-messenger RNA (tmRNA), required for stable association of tmRNA with ribosomes. tmRNA and SmpB together mimic tRNA shape, replacing the anticodon stem-loop with SmpB. tmRNA is encoded by the ssrA gene; the 2 termini fold to resemble tRNA(Ala) and it encodes a 'tag peptide', a short internal open reading frame. During trans-translation Ala-aminoacylated tmRNA acts like a tRNA, entering the A-site of stalled ribosomes, displacing the stalled mRNA. The ribosome then switches to translate the ORF on the tmRNA; the nascent peptide is terminated with the 'tag peptide' encoded by the tmRNA and targeted for degradation. The ribosome is freed to recommence translation, which seems to be the essential function of trans-translation. This is SsrA-binding protein from Rhodopseudomonas palustris (strain ATCC BAA-98 / CGA009).